The primary structure comprises 82 residues: Small ribosomal subunit protein bS20 (82 aa).

This sequence belongs to the bacterial ribosomal protein bS20 family.

Binds directly to 16S ribosomal RNA. In Streptococcus suis (strain 98HAH33), this protein is Small ribosomal subunit protein bS20.